The chain runs to 177 residues: Acireductone dioxygenase (177 aa).

Fe(2+)-binding residues include histidine 99, histidine 101, glutamate 105, and histidine 143. Residues histidine 99, histidine 101, glutamate 105, and histidine 143 each contribute to the Ni(2+) site.

Belongs to the acireductone dioxygenase (ARD) family. In terms of assembly, monomer. The cofactor is Fe(2+). It depends on Ni(2+) as a cofactor.

It carries out the reaction 1,2-dihydroxy-5-(methylsulfanyl)pent-1-en-3-one + O2 = 3-(methylsulfanyl)propanoate + CO + formate + 2 H(+). The enzyme catalyses 1,2-dihydroxy-5-(methylsulfanyl)pent-1-en-3-one + O2 = 4-methylsulfanyl-2-oxobutanoate + formate + 2 H(+). Its pathway is amino-acid biosynthesis; L-methionine biosynthesis via salvage pathway; L-methionine from S-methyl-5-thio-alpha-D-ribose 1-phosphate: step 5/6. Its function is as follows. Catalyzes 2 different reactions between oxygen and the acireductone 1,2-dihydroxy-3-keto-5-methylthiopentene (DHK-MTPene) depending upon the metal bound in the active site. Fe-containing acireductone dioxygenase (Fe-ARD) produces formate and 2-keto-4-methylthiobutyrate (KMTB), the alpha-ketoacid precursor of methionine in the methionine recycle pathway. Ni-containing acireductone dioxygenase (Ni-ARD) produces methylthiopropionate, carbon monoxide and formate, and does not lie on the methionine recycle pathway. This is Acireductone dioxygenase from Leptospira borgpetersenii serovar Hardjo-bovis (strain L550).